Reading from the N-terminus, the 560-residue chain is Putative transport protein VFMJ11_0927 (560 aa).

Helical transmembrane passes span 8–28 (LLSQNDILLLFVVLALGLFIA), 37–57 (LGSSIGVLITALFMGSLGYTF), 66–86 (FMLFIFCVGIEAGPNFFGIFL), 94–114 (LLVLVVLVSAVSLSFLTGHYF), and 161–181 (NLSVGYAFSYLIGLTSLILLA). 2 consecutive RCK C-terminal domains span residues 203–292 (RGIG…FRNG) and 293–376 (KEVF…KIGF). A run of 5 helical transmembrane segments spans residues 386–406 (LLAFCSFFILGIMFGMITMSF), 409–429 (VTFGLGNAVGLLISGITLGFL), 451–471 (GLLVFMVGIGLSAGGNINEYF), 478–498 (VLAAAFIVSVIPVILAYLVGA), and 539–559 (AGTYAIANILMTVAGTIMILL).

It belongs to the AAE transporter (TC 2.A.81) family. YbjL subfamily.

It localises to the cell membrane. The sequence is that of Putative transport protein VFMJ11_0927 from Aliivibrio fischeri (strain MJ11) (Vibrio fischeri).